Consider the following 290-residue polypeptide: Release factor glutamine methyltransferase (290 aa).

S-adenosyl-L-methionine-binding residues include Asp-140 and Asn-181. Substrate is bound at residue Asn-181–Tyr-184.

It belongs to the protein N5-glutamine methyltransferase family. PrmC subfamily.

The catalysed reaction is L-glutaminyl-[peptide chain release factor] + S-adenosyl-L-methionine = N(5)-methyl-L-glutaminyl-[peptide chain release factor] + S-adenosyl-L-homocysteine + H(+). Functionally, methylates the class 1 translation termination release factors RF1/PrfA and RF2/PrfB on the glutamine residue of the universally conserved GGQ motif. This is Release factor glutamine methyltransferase from Chlamydia trachomatis serovar D (strain ATCC VR-885 / DSM 19411 / UW-3/Cx).